The chain runs to 618 residues: Putative ATP-dependent DNA helicase Q1 (618 aa).

Residues 95 to 270 (INAVMSKEDA…KKMLGIPVAI (176 aa)) form the Helicase ATP-binding domain. ATP is bound at residue 108–115 (LSTGGGKS). The DEVH box signature appears at 214–217 (DEVH). The 149-residue stretch at 295–443 (CVEKIVRTIK…NLYNMVRYAS (149 aa)) folds into the Helicase C-terminal domain. Residues Cys448, Cys466, Cys470, and Cys473 each contribute to the Zn(2+) site. Positions 586-618 (KGRAEENNRKRKAAVTSSDEEVDVGDDDDVITL) are disordered. The span at 603 to 618 (SDEEVDVGDDDDVITL) shows a compositional bias: acidic residues.

The protein belongs to the helicase family. RecQ subfamily. The cofactor is Zn(2+).

It localises to the nucleus. It carries out the reaction Couples ATP hydrolysis with the unwinding of duplex DNA by translocating in the 3'-5' direction.. The catalysed reaction is ATP + H2O = ADP + phosphate + H(+). In terms of biological role, DNA helicase that may play a role in the repair of DNA that is damaged by ultraviolet light or other mutagens. Exhibits a magnesium-dependent ATP-dependent DNA-helicase activity that unwinds single- and double-stranded DNA in a 3'-5' direction. The polypeptide is Putative ATP-dependent DNA helicase Q1 (Caenorhabditis briggsae).